A 124-amino-acid polypeptide reads, in one-letter code: MADEEEDPTFEEENEEIGGGAEGGQGKRKRLFSKELRCMMYGFGDDQNPYTESVDILEDLVIEFITEMTHKAMSIGRQGRVQVEDIVFLIRKDPRKFARVKDLLTMNEELKRARKAFDEANYGS.

Over residues 1 to 16 the composition is skewed to acidic residues; that stretch reads MADEEEDPTFEEENEE. Residues 1–28 are disordered; the sequence is MADEEEDPTFEEENEEIGGGAEGGQGKR. The region spanning 32 to 74 is the Histone-fold domain; the sequence is FSKELRCMMYGFGDDQNPYTESVDILEDLVIEFITEMTHKAMS.

The protein belongs to the TAF13 family. As to quaternary structure, component of the TFIID basal transcription factor complex, composed of TATA-box-binding protein TBP, and a number of TBP-associated factors (TAFs), including TAF1, TAF2, TAF3, TAF4, TAF5, TAF6, TAF7, TAF8, TAF9, TAF10, TAF11, TAF12 and TAF13. Interacts with TBP, and more strongly with TAF10 and TAF11.

It is found in the nucleus. The TFIID basal transcription factor complex plays a major role in the initiation of RNA polymerase II (Pol II)-dependent transcription. TFIID recognizes and binds promoters via its subunit TBP, a TATA-box-binding protein, and promotes assembly of the pre-initiation complex (PIC). The TFIID complex consists of TBP and TBP-associated factors (TAFs), including TAF1, TAF2, TAF3, TAF4, TAF5, TAF6, TAF7, TAF8, TAF9, TAF10, TAF11, TAF12 and TAF13. TAF13, together with TAF11 and TBP, play key roles during promoter binding by the TFIID and TFIIA transcription factor complexes. This chain is Transcription initiation factor TFIID subunit 13, found in Bos taurus (Bovine).